Here is a 313-residue protein sequence, read N- to C-terminus: MLNIDIIIIIIIDILVVLILTGFVSLCERRILALVQIRIGPALCFFGILTPITDGIKLFIKFIIFVISFDIIYLIGAMIITACCIFLGWFYFPIGFILLLDTGFTLTVMLCVHVFCSMFSTFFVGCFLFSSCFVYLSAMRTMFFSIISESGIFLLYTTIYSLDYFSFFGIKDVCVGQIYITNFYIAGVLFISVFWVSMLLDGLKLPFDYMECESELVAGLITELSGFFFVLYSVLEINHILLTTLLFASLCFGGLFICFKAILILIFGFFYPRVIGYRLKITTAQAFILIFLFYMCVLMFIWLFTTKIIAMLF.

Transmembrane regions (helical) follow at residues 6 to 26 (IIIIIIIDILVVLILTGFVSL), 31 to 51 (ILALVQIRIGPALCFFGILTP), 62 to 82 (FIIFVISFDIIYLIGAMIITA), 84 to 104 (CIFLGWFYFPIGFILLLDTGF), 109 to 129 (MLCVHVFCSMFSTFFVGCFLF), 142 to 162 (MFFSIISESGIFLLYTTIYSL), 183 to 203 (FYIAGVLFISVFWVSMLLDGL), 216 to 235 (LVAGLITELSGFFFVLYSVL), 250 to 270 (LCFGGLFICFKAILILIFGFF), and 286 to 306 (AFILIFLFYMCVLMFIWLFTT).

It belongs to the complex I subunit 1 family.

It localises to the mitochondrion inner membrane. It carries out the reaction a ubiquinone + NADH + 5 H(+)(in) = a ubiquinol + NAD(+) + 4 H(+)(out). Core subunit of the mitochondrial membrane respiratory chain NADH dehydrogenase (Complex I) that is believed to belong to the minimal assembly required for catalysis. Complex I functions in the transfer of electrons from NADH to the respiratory chain. The immediate electron acceptor for the enzyme is believed to be ubiquinone. The polypeptide is NADH-ubiquinone oxidoreductase chain 1 (ND1) (Leishmania tarentolae (Sauroleishmania tarentolae)).